Consider the following 66-residue polypeptide: ATP synthase subunit c (66 aa).

Transmembrane regions (helical) follow at residues 3 to 23 (LTFF…GMLM) and 45 to 65 (IMGI…SFVI).

It belongs to the ATPase C chain family. As to quaternary structure, F-type ATPases have 2 components, F(1) - the catalytic core - and F(0) - the membrane proton channel. F(1) has five subunits: alpha(3), beta(3), gamma(1), delta(1), epsilon(1). F(0) has three main subunits: a(1), b(2) and c(10-14). The alpha and beta chains form an alternating ring which encloses part of the gamma chain. F(1) is attached to F(0) by a central stalk formed by the gamma and epsilon chains, while a peripheral stalk is formed by the delta and b chains.

It localises to the cell membrane. F(1)F(0) ATP synthase produces ATP from ADP in the presence of a proton or sodium gradient. F-type ATPases consist of two structural domains, F(1) containing the extramembraneous catalytic core and F(0) containing the membrane proton channel, linked together by a central stalk and a peripheral stalk. During catalysis, ATP synthesis in the catalytic domain of F(1) is coupled via a rotary mechanism of the central stalk subunits to proton translocation. In terms of biological role, key component of the F(0) channel; it plays a direct role in translocation across the membrane. A homomeric c-ring of between 10-14 subunits forms the central stalk rotor element with the F(1) delta and epsilon subunits. The protein is ATP synthase subunit c (atpE) of Streptococcus oralis.